Here is a 74-residue protein sequence, read N- to C-terminus: Cytochrome c oxidase subunit 2 (74 aa).

At 1 to 14 (MAHPSQLGLQDAAS) the chain is on the mitochondrial intermembrane side. Residues 15-45 (PVMEELLHFHDHALMIVFLISTLVLYIIVAM) form a helical membrane-spanning segment. The Mitochondrial matrix portion of the chain corresponds to 46–74 (VSTKLTDKYTIDSQEIEIVWTVLPAVILI).

The protein belongs to the cytochrome c oxidase subunit 2 family. Component of the cytochrome c oxidase (complex IV, CIV), a multisubunit enzyme composed of 14 subunits. The complex is composed of a catalytic core of 3 subunits MT-CO1, MT-CO2 and MT-CO3, encoded in the mitochondrial DNA, and 11 supernumerary subunits COX4I, COX5A, COX5B, COX6A, COX6B, COX6C, COX7A, COX7B, COX7C, COX8 and NDUFA4, which are encoded in the nuclear genome. The complex exists as a monomer or a dimer and forms supercomplexes (SCs) in the inner mitochondrial membrane with NADH-ubiquinone oxidoreductase (complex I, CI) and ubiquinol-cytochrome c oxidoreductase (cytochrome b-c1 complex, complex III, CIII), resulting in different assemblies (supercomplex SCI(1)III(2)IV(1) and megacomplex MCI(2)III(2)IV(2)). Found in a complex with TMEM177, COA6, COX18, COX20, SCO1 and SCO2. Interacts with TMEM177 in a COX20-dependent manner. Interacts with COX20. Interacts with COX16. It depends on Cu cation as a cofactor.

The protein resides in the mitochondrion inner membrane. The enzyme catalyses 4 Fe(II)-[cytochrome c] + O2 + 8 H(+)(in) = 4 Fe(III)-[cytochrome c] + 2 H2O + 4 H(+)(out). Functionally, component of the cytochrome c oxidase, the last enzyme in the mitochondrial electron transport chain which drives oxidative phosphorylation. The respiratory chain contains 3 multisubunit complexes succinate dehydrogenase (complex II, CII), ubiquinol-cytochrome c oxidoreductase (cytochrome b-c1 complex, complex III, CIII) and cytochrome c oxidase (complex IV, CIV), that cooperate to transfer electrons derived from NADH and succinate to molecular oxygen, creating an electrochemical gradient over the inner membrane that drives transmembrane transport and the ATP synthase. Cytochrome c oxidase is the component of the respiratory chain that catalyzes the reduction of oxygen to water. Electrons originating from reduced cytochrome c in the intermembrane space (IMS) are transferred via the dinuclear copper A center (CU(A)) of subunit 2 and heme A of subunit 1 to the active site in subunit 1, a binuclear center (BNC) formed by heme A3 and copper B (CU(B)). The BNC reduces molecular oxygen to 2 water molecules using 4 electrons from cytochrome c in the IMS and 4 protons from the mitochondrial matrix. This Megalops atlanticus (Tarpon) protein is Cytochrome c oxidase subunit 2 (mt-co2).